The primary structure comprises 314 residues: Inactive chitinase-like protein 1 (314 aa).

An N-terminal signal peptide occupies residues 1–19 (MKEIVRALEGYGPPKDKAA). A Chitin-binding type-1 domain is found at 20 to 60 (EQCGWQAGGALCPGGLCCSQYGWCANTPEYCGSGCQSQCDG). 7 disulfides stabilise this stretch: cysteine 22–cysteine 37, cysteine 31–cysteine 43, cysteine 36–cysteine 50, cysteine 54–cysteine 58, cysteine 92–cysteine 154, cysteine 166–cysteine 174, and cysteine 273–cysteine 305.

This sequence belongs to the glycosyl hydrolase 19 family. Chitinase class I subfamily.

Inactive chitinase-like protein that does not exhibit hydrolytic activity toward chitin. Binds strongly to chitin and possesses antifungal activity toward the fungal pathogen Altenaria alternata in plate assays. Inhibits the growth of Fusarium oxysporum on plate assays. Probably involved in defense against fungal pathogens through a mechanism that only involves carbohydrate binding. In Hevea brasiliensis (Para rubber tree), this protein is Inactive chitinase-like protein 1.